The chain runs to 80 residues: Sulfur carrier protein TusA (80 aa).

The active-site Cysteine persulfide intermediate is the Cys17.

This sequence belongs to the sulfur carrier protein TusA family.

The protein localises to the cytoplasm. Sulfur carrier protein which probably makes part of a sulfur-relay system. The chain is Sulfur carrier protein TusA from Pseudomonas entomophila (strain L48).